The following is a 591-amino-acid chain: V-type ATP synthase alpha chain (591 aa).

233–240 (GPFGAGKT) contributes to the ATP binding site.

Belongs to the ATPase alpha/beta chains family.

It catalyses the reaction ATP + H2O + 4 H(+)(in) = ADP + phosphate + 5 H(+)(out). Functionally, produces ATP from ADP in the presence of a proton gradient across the membrane. The V-type alpha chain is a catalytic subunit. The protein is V-type ATP synthase alpha chain of Streptococcus pneumoniae (strain Hungary19A-6).